A 1419-amino-acid chain; its full sequence is DNA-directed RNA polymerase subunit beta' (1419 aa).

Residues cysteine 71, cysteine 73, cysteine 86, and cysteine 89 each coordinate Zn(2+). Mg(2+) is bound by residues aspartate 461, aspartate 463, and aspartate 465. The Zn(2+) site is built by cysteine 815, cysteine 889, cysteine 896, and cysteine 899.

The protein belongs to the RNA polymerase beta' chain family. The RNAP catalytic core consists of 2 alpha, 1 beta, 1 beta' and 1 omega subunit. When a sigma factor is associated with the core the holoenzyme is formed, which can initiate transcription. The cofactor is Mg(2+). Zn(2+) serves as cofactor.

It catalyses the reaction RNA(n) + a ribonucleoside 5'-triphosphate = RNA(n+1) + diphosphate. In terms of biological role, DNA-dependent RNA polymerase catalyzes the transcription of DNA into RNA using the four ribonucleoside triphosphates as substrates. This Actinobacillus succinogenes (strain ATCC 55618 / DSM 22257 / CCUG 43843 / 130Z) protein is DNA-directed RNA polymerase subunit beta'.